Here is a 2470-residue protein sequence, read N- to C-terminus: Serine/threonine-protein kinase mTor (2470 aa).

HEAT repeat units lie at residues 172–209 (QHILTFFEVIFNAIFDPKPAIRESAGEALRAALIVTAQ), 746–785 (SYMNPILKALVPKLHEPESNPGVILNVLRTIGDLAEVNGG), 791–829 (LWADDLLSILLEMLGDAGSPDKRGVALWTLGQLISATGR), 835–873 (HKYPVLIDILINFLKTEQRRSIRRETIRVLGLLGAMDPY), 962–999 (PYLAQVLPNLLDNVRTADNNLREFLFQQLAILVAFVKL), 1043–1080 (DYLAELIPQILRVLQHDNSKDRMVTRRLLQALQKFGST), 1083–1122 (YYLPLILPPIVKLFDSPYVPQQVSMVALETINNLACQLDF), and 1124–1160 (DFSSRIIHPLVRVLDAEPELRDQAMTTLRSLAKQLGK). Residues 1349–1903 (LLGTRAMACR…VYPLTVASKS (555 aa)) form the FAT domain. TPR repeat units lie at residues 1407 to 1440 (ANELNVQGRWYEKLHNWDEALEHYERNLKTDSSD) and 1718 to 1751 (MATWQNKLQDSIRPDAIQGALECFEKATSYDPNW). The stretch at 1854–1891 (NTWLQVIPQLIARIDTHRQLVGQLIHQLLMDIGKNHPQ) is one HEAT 9 repeat. Positions 2077-2389 (IKTNLQVITS…SLSNSVEDSL (313 aa)) constitute a PI3K/PI4K catalytic domain. The segment at 2083-2089 (VITSKQR) is G-loop. Positions 2256–2264 (GLGDRHPSN) are catalytic loop. Residues 2276–2301 (HIDFGDCFEVAMTREKFPEKIPFRLT) form an activation loop region. Residues 2364-2389 (AGAGAPGGRGGSGMQDSLSNSVEDSL) form a disordered region. The span at 2367–2376 (GAPGGRGGSG) shows a compositional bias: gly residues. Over residues 2377-2386 (MQDSLSNSVE) the composition is skewed to polar residues. The FATC domain occupies 2438–2470 (KSVNEQSQVELLIQQATNNENLCQCYIGWCPFW).

The protein belongs to the PI3/PI4-kinase family. In terms of assembly, may be part of a minimal complex, TORC1, consisting of mTor, raptor and lst8. May be part of a minimal complex, TORC2, consisting of mTor, rictor and lst8. Self-associates; assembles into homomultimeric complexes. Component of a multiprotein complex.

The enzyme catalyses L-seryl-[protein] + ATP = O-phospho-L-seryl-[protein] + ADP + H(+). The catalysed reaction is L-threonyl-[protein] + ATP = O-phospho-L-threonyl-[protein] + ADP + H(+). In terms of biological role, promotes cell and tissue growth, maintains tissue homeostatis and controls responses to environmental stress and aging. Regulates growth during animal development by coupling growth factor signaling to nutrient availability. Central regulators of autophagy. May be involved in atg1 phosphorylation. May also be involved, directly or indirectly, in the control of neuronal function. Phosphorylates S6K/p70S6K, in vitro. May regulate the activity of S6K. Overexpression inhibits growth and reduces cell size. Affects the timing of neuronal cell differentiation. Hyperactivation of the signaling leads to accelerated differentiation, whereas inhibition of the signaling retards differentiation. Thus, in addition to controlling growth of the cell in which it resides, it can also influence growth of distant cells and organs during development via a humoral mechanism. As part of the TORC1 complex regulates energy homeostasis and promotes certain aspects of larval growth by negatively regulating REPTOR. REPTOR functions downstream of TORC1 to regulate the expression of stress response genes in response to TORC1 inhibition resulting from nutrient deprivation. When TORC1 activity is high it phosphorylates REPTOR which inhibits its recruitment into the nucleus and antagonizes their function. This function is essential under normal feeding conditions to promote TORC1-dependent growth during larval development and, in adults and larvae to prevent the REPTOR-dependent expression of nutrient stress response genes. In short, during development, it primarily controls growth, whereas in the adult, where there is relatively little growth, it controls aging and other aspects of nutrient-related physiology. Rag GTPases act as activators of TORC1 in response to amino acid signals. In Drosophila melanogaster (Fruit fly), this protein is Serine/threonine-protein kinase mTor.